Reading from the N-terminus, the 129-residue chain is Transcriptional activator protein (129 aa).

Positions 13–28 match the Nuclear localization signal motif; it reads KAQHKIAKRRAVRRRR. A zinc finger spans residues 33–50; sequence CGCSIFLHINCADNGFTH. The disordered stretch occupies residues 73 to 109; it reads IFQDTTRRGPVVHQNQDLPHPSPVQPQPTESIGSPQS. Residue S109 is modified to Phosphoserine; by host. Residues 115–129 are transactivation; that stretch reads SLDDFDESFWADIFK.

This sequence belongs to the geminiviridae transcriptional activator protein family. Monomer. Homodimer. Homooligomer. Self-interaction correlates with nuclear localization and efficient activation of transcription. Monomers suppress local silencing by interacting with and inactivating host adenosine kinase 2 (ADK2) in the cytoplasm. Interacts with and inhibits host SNF1 kinase. Binds to ssDNA. In terms of processing, phosphorylated at Ser-109 by A.thaliana KIN10.

The protein localises to the host nucleus. It localises to the host cytoplasm. Strong activator of the late viral genes promoters. Enhances the expression of the capsid protein and nuclear shuttle protein. Acts as a suppressor of RNA-mediated gene silencing, also known as post-transcriptional gene silencing (PTGS), a mechanism of plant viral defense that limits the accumulation of viral RNAs. Suppresses the host RNA silencing by inhibiting adenosine kinase 2 (ADK2), a kinase involved in a general methylation pathway. Also suppresses the host basal defense by interacting with and inhibiting SNF1 kinase, a key regulator of cell metabolism implicated in innate antiviral defense. Determines pathogenicity. This Cabbage leaf curl virus (isolate Jamaica) (CaLCuV) protein is Transcriptional activator protein.